The chain runs to 229 residues: Protein ras-2 (229 aa).

A GTP-binding site is contributed by 15 to 22 (GDGGVGKT). Positions 37-45 (YDPTIEDSY) match the Effector region motif. Residue 62–66 (DTAGQ) coordinates GTP. The segment at 109 to 132 (KESTSSPSAYPGSSPLAATNPSAP) is disordered. Residues 111–126 (STSSPSAYPGSSPLAA) show a composition bias toward low complexity. GTP is bound at residue 140–143 (NKSD). Residues 188-229 (LRKQRQQGQSTPRALPPSGNSKSEKYSGTEKPKRPRGKCLII) form a disordered region. Over residues 209 to 219 (KSEKYSGTEKP) the composition is skewed to basic and acidic residues. The segment covering 220-229 (KRPRGKCLII) has biased composition (basic residues). Residue Cys226 is modified to Cysteine methyl ester. Cys226 carries S-farnesyl cysteine lipidation. A propeptide spans 227 to 229 (LII) (removed in mature form).

The protein belongs to the small GTPase superfamily. Ras family.

The protein localises to the cell membrane. The enzyme catalyses GTP + H2O = GDP + phosphate + H(+). Ras proteins bind GDP/GTP and possess intrinsic GTPase activity. This Neurospora crassa (strain ATCC 24698 / 74-OR23-1A / CBS 708.71 / DSM 1257 / FGSC 987) protein is Protein ras-2 (ras-2).